The following is a 118-amino-acid chain: Probable FK506-binding protein (118 aa).

Positions 33–118 (GGEVEVHYVG…LVFIIDLISA (86 aa)) constitute a PPIase FKBP-type domain.

It belongs to the FKBP-type PPIase family.

It carries out the reaction [protein]-peptidylproline (omega=180) = [protein]-peptidylproline (omega=0). Its function is as follows. PPIases accelerate the folding of proteins. This is Probable FK506-binding protein from Corynebacterium glutamicum (strain ATCC 13032 / DSM 20300 / JCM 1318 / BCRC 11384 / CCUG 27702 / LMG 3730 / NBRC 12168 / NCIMB 10025 / NRRL B-2784 / 534).